Reading from the N-terminus, the 229-residue chain is Octanoyltransferase (229 aa).

A BPL/LPL catalytic domain is found at 47 to 225 (PSSPEAVWIL…SLAARFHLAW (179 aa)). Residues 89–96 (RGGEVTHH), 156–158 (AIG), and 169–171 (GLA) contribute to the substrate site. The active-site Acyl-thioester intermediate is Cys-187.

Belongs to the LipB family.

It localises to the cytoplasm. It carries out the reaction octanoyl-[ACP] + L-lysyl-[protein] = N(6)-octanoyl-L-lysyl-[protein] + holo-[ACP] + H(+). It functions in the pathway protein modification; protein lipoylation via endogenous pathway; protein N(6)-(lipoyl)lysine from octanoyl-[acyl-carrier-protein]: step 1/2. In terms of biological role, catalyzes the transfer of endogenously produced octanoic acid from octanoyl-acyl-carrier-protein onto the lipoyl domains of lipoate-dependent enzymes. Lipoyl-ACP can also act as a substrate although octanoyl-ACP is likely to be the physiological substrate. This Synechococcus sp. (strain CC9902) protein is Octanoyltransferase.